A 161-amino-acid chain; its full sequence is RNA pyrophosphohydrolase (161 aa).

Positions P12–K154 constitute a Nudix hydrolase domain. Residues G46–G67 carry the Nudix box motif.

This sequence belongs to the Nudix hydrolase family. RppH subfamily. A divalent metal cation serves as cofactor.

Functionally, accelerates the degradation of transcripts by removing pyrophosphate from the 5'-end of triphosphorylated RNA, leading to a more labile monophosphorylated state that can stimulate subsequent ribonuclease cleavage. This is RNA pyrophosphohydrolase from Rickettsia africae (strain ESF-5).